A 253-amino-acid chain; its full sequence is uncharacterized protein (253 aa).

An N-terminal signal peptide occupies residues 1-25 (MRKKKFLSKVSFGSLFLLCGTVLSA). Cys26 carries N-palmitoyl cysteine lipidation. Residue Cys26 is the site of S-diacylglycerol cysteine attachment.

This sequence belongs to the MG439/MG440 family.

Its subcellular location is the cell membrane. This is an uncharacterized protein from Mycoplasma pneumoniae (strain ATCC 29342 / M129 / Subtype 1) (Mycoplasmoides pneumoniae).